A 298-amino-acid polypeptide reads, in one-letter code: Tyrosine recombinase XerC (298 aa).

Positions 2 to 88 (TDLHTDVERY…ALRSFFDWLV (87 aa)) constitute a Core-binding (CB) domain. The 180-residue stretch at 109 to 288 (HLPKNIDVDD…DFQHLASVYD (180 aa)) folds into the Tyr recombinase domain. Active-site residues include Arg148, Lys172, His240, Arg243, and His266. The active-site O-(3'-phospho-DNA)-tyrosine intermediate is Tyr275.

Belongs to the 'phage' integrase family. XerC subfamily. As to quaternary structure, forms a cyclic heterotetrameric complex composed of two molecules of XerC and two molecules of XerD, in which XerC interacts with XerD via its C-terminal region, XerD interacts with XerC via its C-terminal region and so on.

The protein localises to the cytoplasm. FtsK may regulate the catalytic switch between XerC and XerD in the heterotetrameric complex during the two steps of the recombination process. Site-specific tyrosine recombinase, which acts by catalyzing the cutting and rejoining of the recombining DNA molecules. Binds cooperatively to specific DNA consensus sequences that are separated from XerD binding sites by a short central region, forming the heterotetrameric XerC-XerD complex that recombines DNA substrates. The complex is essential to convert dimers of the bacterial chromosome into monomers to permit their segregation at cell division. It also contributes to the segregational stability of plasmids. In the complex XerC specifically exchanges the top DNA strands. This Escherichia coli (strain 55989 / EAEC) protein is Tyrosine recombinase XerC.